We begin with the raw amino-acid sequence, 239 residues long: 1-(5-phosphoribosyl)-5-[(5-phosphoribosylamino)methylideneamino] imidazole-4-carboxamide isomerase (239 aa).

Catalysis depends on aspartate 8, which acts as the Proton acceptor. The Proton donor role is filled by aspartate 129.

Belongs to the HisA/HisF family.

It is found in the cytoplasm. It carries out the reaction 1-(5-phospho-beta-D-ribosyl)-5-[(5-phospho-beta-D-ribosylamino)methylideneamino]imidazole-4-carboxamide = 5-[(5-phospho-1-deoxy-D-ribulos-1-ylimino)methylamino]-1-(5-phospho-beta-D-ribosyl)imidazole-4-carboxamide. Its pathway is amino-acid biosynthesis; L-histidine biosynthesis; L-histidine from 5-phospho-alpha-D-ribose 1-diphosphate: step 4/9. This is 1-(5-phosphoribosyl)-5-[(5-phosphoribosylamino)methylideneamino] imidazole-4-carboxamide isomerase from Cereibacter sphaeroides (strain ATCC 17029 / ATH 2.4.9) (Rhodobacter sphaeroides).